A 396-amino-acid chain; its full sequence is MLLTKKVLWYFRHGIEYQIRSIACKKGYSEHNVSRVLIEKARSLSSEYLQFHQVNNKDQSAMTNDTDLAKRIARLRRVHNAYSKFKSLSEQISDLKQMEAQESDAEVKMMAVTEINEISNKIPKSIEDLENTLLPQADSYALPALIEIRPGVGGTEAAIFANELVEMYFQYANFKGWNCKFISKSAVQGLEAITEAIFSIEGEGAYGHLMLEGGVHRVQRTPATETKGRVHTSTASVIVLPQVSNDESSSLYDSSEVKIEVMRSRGAGGQHVNRTESAVRLTHIPTGITVSMQDSRSQHQNKEKAFLVLNSRLAALNAAKENEAERLKRKNQVTSSDRSEKLRTYNFNQNRVTDHRIGLSMHDLSTFMQGEEKFDEFLEKIRIWNREQLLLHSEIV.

Q270 is subject to N5-methylglutamine.

Belongs to the prokaryotic/mitochondrial release factor family. Post-translationally, methylation of glutamine in the GGQ triplet is conserved from bacteria to mammals.

Its subcellular location is the mitochondrion. In Schizosaccharomyces pombe (strain 972 / ATCC 24843) (Fission yeast), this protein is Putative peptide chain release factor 1, mitochondrial.